Here is a 248-residue protein sequence, read N- to C-terminus: Pyridoxine 5'-phosphate synthase (248 aa).

Asn-7 contacts 3-amino-2-oxopropyl phosphate. 9 to 10 lines the 1-deoxy-D-xylulose 5-phosphate pocket; it reads DH. Arg-18 contacts 3-amino-2-oxopropyl phosphate. His-43 (proton acceptor) is an active-site residue. Residues Arg-45 and His-50 each coordinate 1-deoxy-D-xylulose 5-phosphate. Glu-70 (proton acceptor) is an active-site residue. Thr-100 contacts 1-deoxy-D-xylulose 5-phosphate. His-191 functions as the Proton donor in the catalytic mechanism. Residues Gly-192 and 213 to 214 contribute to the 3-amino-2-oxopropyl phosphate site; that span reads GH.

The protein belongs to the PNP synthase family. Homooctamer; tetramer of dimers.

It localises to the cytoplasm. The catalysed reaction is 3-amino-2-oxopropyl phosphate + 1-deoxy-D-xylulose 5-phosphate = pyridoxine 5'-phosphate + phosphate + 2 H2O + H(+). The protein operates within cofactor biosynthesis; pyridoxine 5'-phosphate biosynthesis; pyridoxine 5'-phosphate from D-erythrose 4-phosphate: step 5/5. In terms of biological role, catalyzes the complicated ring closure reaction between the two acyclic compounds 1-deoxy-D-xylulose-5-phosphate (DXP) and 3-amino-2-oxopropyl phosphate (1-amino-acetone-3-phosphate or AAP) to form pyridoxine 5'-phosphate (PNP) and inorganic phosphate. This chain is Pyridoxine 5'-phosphate synthase, found in Bordetella bronchiseptica (strain ATCC BAA-588 / NCTC 13252 / RB50) (Alcaligenes bronchisepticus).